A 101-amino-acid polypeptide reads, in one-letter code: uncharacterized protein (101 aa).

The signal sequence occupies residues 1 to 27 (MQLTGSIYPWFTAYALLKSTLMELINS). Transmembrane regions (helical) follow at residues 42–64 (LVPY…AISF) and 79–98 (TFVF…NTFL).

It is found in the cytoplasm. Its subcellular location is the nucleus membrane. This is an uncharacterized protein from Schizosaccharomyces pombe (strain 972 / ATCC 24843) (Fission yeast).